The primary structure comprises 396 residues: Acetyl-CoA acetyltransferase ERG10, cytosolic (396 aa).

Cys-91 serves as the catalytic Acyl-thioester intermediate. Residue Tyr-186 participates in K(+) binding. CoA is bound by residues Asn-227 and Lys-230. Ala-246, Pro-247, and Val-347 together coordinate K(+). Residues His-351 and Cys-381 each act as proton acceptor in the active site. Asn-382 serves as a coordination point for chloride.

Belongs to the thiolase-like superfamily. Thiolase family. As to quaternary structure, homotetramer. K(+) serves as cofactor.

Its subcellular location is the cytoplasm. It is found in the cytosol. The catalysed reaction is 2 acetyl-CoA = acetoacetyl-CoA + CoA. It participates in metabolic intermediate biosynthesis; (R)-mevalonate biosynthesis; (R)-mevalonate from acetyl-CoA: step 1/3. Acetyl-CoA acetyltransferase; part of the first module of ergosterol biosynthesis pathway that includes the early steps of the pathway, conserved across all eukaryotes, and which results in the formation of mevalonate from acetyl-coenzyme A (acetyl-CoA). ERG10B catalyzes the formation of acetoacetyl-CoA from acetyl-CoA. The first module starts with the action of the cytosolic acetyl-CoA acetyltransferase ERG10B that catalyzes the formation of acetoacetyl-CoA. The hydroxymethylglutaryl-CoA synthases ERG13 then condenses acetyl-CoA with acetoacetyl-CoA to form HMG-CoA. The rate-limiting step of the early module is the reduction to mevalonate by the 3-hydroxy-3-methylglutaryl-coenzyme A (HMG-CoA) reductases HMG1. In Gibberella zeae (strain ATCC MYA-4620 / CBS 123657 / FGSC 9075 / NRRL 31084 / PH-1) (Wheat head blight fungus), this protein is Acetyl-CoA acetyltransferase ERG10, cytosolic.